The chain runs to 361 residues: Peptide chain release factor 1 (361 aa).

Q235 is modified (N5-methylglutamine).

This sequence belongs to the prokaryotic/mitochondrial release factor family. Methylated by PrmC. Methylation increases the termination efficiency of RF1.

Its subcellular location is the cytoplasm. In terms of biological role, peptide chain release factor 1 directs the termination of translation in response to the peptide chain termination codons UAG and UAA. The sequence is that of Peptide chain release factor 1 from Xanthomonas euvesicatoria pv. vesicatoria (strain 85-10) (Xanthomonas campestris pv. vesicatoria).